The primary structure comprises 273 residues: Imidazole glycerol phosphate synthase subunit HisF (273 aa).

Catalysis depends on residues D11 and D134.

This sequence belongs to the HisA/HisF family. In terms of assembly, heterodimer of HisH and HisF.

The protein localises to the cytoplasm. It carries out the reaction 5-[(5-phospho-1-deoxy-D-ribulos-1-ylimino)methylamino]-1-(5-phospho-beta-D-ribosyl)imidazole-4-carboxamide + L-glutamine = D-erythro-1-(imidazol-4-yl)glycerol 3-phosphate + 5-amino-1-(5-phospho-beta-D-ribosyl)imidazole-4-carboxamide + L-glutamate + H(+). The protein operates within amino-acid biosynthesis; L-histidine biosynthesis; L-histidine from 5-phospho-alpha-D-ribose 1-diphosphate: step 5/9. Functionally, IGPS catalyzes the conversion of PRFAR and glutamine to IGP, AICAR and glutamate. The HisF subunit catalyzes the cyclization activity that produces IGP and AICAR from PRFAR using the ammonia provided by the HisH subunit. The chain is Imidazole glycerol phosphate synthase subunit HisF from Methanosarcina mazei (strain ATCC BAA-159 / DSM 3647 / Goe1 / Go1 / JCM 11833 / OCM 88) (Methanosarcina frisia).